The sequence spans 363 residues: 3-isopropylmalate dehydrogenase (363 aa).

78 to 91 (GPKWEHLPPDQQPE) is a binding site for NAD(+). Residues Arg-99, Arg-109, Arg-138, and Asp-227 each contribute to the substrate site. Mg(2+) contacts are provided by Asp-227, Asp-251, and Asp-255. 285-297 (GSAPDIAGKNIAN) is a binding site for NAD(+).

The protein belongs to the isocitrate and isopropylmalate dehydrogenases family. LeuB type 1 subfamily. Homodimer. Mg(2+) serves as cofactor. Requires Mn(2+) as cofactor.

The protein resides in the cytoplasm. The catalysed reaction is (2R,3S)-3-isopropylmalate + NAD(+) = 4-methyl-2-oxopentanoate + CO2 + NADH. It functions in the pathway amino-acid biosynthesis; L-leucine biosynthesis; L-leucine from 3-methyl-2-oxobutanoate: step 3/4. Functionally, catalyzes the oxidation of 3-carboxy-2-hydroxy-4-methylpentanoate (3-isopropylmalate) to 3-carboxy-4-methyl-2-oxopentanoate. The product decarboxylates to 4-methyl-2 oxopentanoate. This Shigella sonnei (strain Ss046) protein is 3-isopropylmalate dehydrogenase.